The following is a 342-amino-acid chain: S-adenosylmethionine:tRNA ribosyltransferase-isomerase (342 aa).

The protein belongs to the QueA family. As to quaternary structure, monomer.

The protein localises to the cytoplasm. The enzyme catalyses 7-aminomethyl-7-carbaguanosine(34) in tRNA + S-adenosyl-L-methionine = epoxyqueuosine(34) in tRNA + adenine + L-methionine + 2 H(+). It functions in the pathway tRNA modification; tRNA-queuosine biosynthesis. In terms of biological role, transfers and isomerizes the ribose moiety from AdoMet to the 7-aminomethyl group of 7-deazaguanine (preQ1-tRNA) to give epoxyqueuosine (oQ-tRNA). The polypeptide is S-adenosylmethionine:tRNA ribosyltransferase-isomerase (Campylobacter jejuni subsp. jejuni serotype O:23/36 (strain 81-176)).